The sequence spans 364 residues: Probable dual-specificity RNA methyltransferase RlmN (364 aa).

The active-site Proton acceptor is glutamate 106. The Radical SAM core domain maps to 112-350 (YPQRNTVCIS…SCTVRDTRGR (239 aa)). A disulfide bond links cysteine 119 and cysteine 356. [4Fe-4S] cluster contacts are provided by cysteine 126, cysteine 130, and cysteine 133. S-adenosyl-L-methionine-binding positions include 177-178 (GE), serine 211, 234-236 (SLH), and asparagine 313. Cysteine 356 acts as the S-methylcysteine intermediate in catalysis.

Belongs to the radical SAM superfamily. RlmN family. [4Fe-4S] cluster is required as a cofactor.

The protein resides in the cytoplasm. It catalyses the reaction adenosine(2503) in 23S rRNA + 2 reduced [2Fe-2S]-[ferredoxin] + 2 S-adenosyl-L-methionine = 2-methyladenosine(2503) in 23S rRNA + 5'-deoxyadenosine + L-methionine + 2 oxidized [2Fe-2S]-[ferredoxin] + S-adenosyl-L-homocysteine. The enzyme catalyses adenosine(37) in tRNA + 2 reduced [2Fe-2S]-[ferredoxin] + 2 S-adenosyl-L-methionine = 2-methyladenosine(37) in tRNA + 5'-deoxyadenosine + L-methionine + 2 oxidized [2Fe-2S]-[ferredoxin] + S-adenosyl-L-homocysteine. Specifically methylates position 2 of adenine 2503 in 23S rRNA and position 2 of adenine 37 in tRNAs. This is Probable dual-specificity RNA methyltransferase RlmN from Mycobacterium ulcerans (strain Agy99).